Reading from the N-terminus, the 478-residue chain is 2,5-dioxopentanoate dehydrogenase (478 aa).

Residues 148–149, 172–175, and 225–226 contribute to the NADP(+) site; these read WN, KPAT, and GS. E249 serves as the catalytic Proton acceptor. The active-site Nucleophile is the C283. An NADP(+)-binding site is contributed by E379.

Belongs to the aldehyde dehydrogenase family. In terms of assembly, homotetramer.

It carries out the reaction 2,5-dioxopentanoate + NADP(+) + H2O = 2-oxoglutarate + NADPH + 2 H(+). Functionally, 2,5-dioxopentanoate dehydrogenase involved in the degradation of pentoses such as D-arabinose or D-xylose, a major component of hemicelluloses such as xylan. Catalyzes the fifth reaction in the pentose utilization pathway through dehydratation of 2,5-dioxopentanoate into 2-oxoglutarate. Also shows dehydrogenase activity toward glycolaldehyde and DL-glyceraldehyde. The polypeptide is 2,5-dioxopentanoate dehydrogenase (Saccharolobus solfataricus (strain ATCC 35092 / DSM 1617 / JCM 11322 / P2) (Sulfolobus solfataricus)).